The primary structure comprises 354 residues: Hyaluronan and proteoglycan link protein 1 (354 aa).

The propeptide occupies 1–9 (MKSLLLLVL). N-linked (GlcNAc...) asparagine glycosylation is found at asparagine 21 and asparagine 56. The region spanning 38–152 (PRLLVEAEQA…EGLEDDTAVV (115 aa)) is the Ig-like V-type domain. Cystine bridges form between cysteine 61-cysteine 139, cysteine 181-cysteine 252, cysteine 205-cysteine 226, cysteine 279-cysteine 349, and cysteine 304-cysteine 325. 2 Link domains span residues 159–254 (VVFP…FCFT) and 259–351 (GRFY…YCFR).

Belongs to the HAPLN family.

The protein localises to the secreted. The protein resides in the extracellular space. Its subcellular location is the extracellular matrix. Functionally, stabilizes the aggregates of proteoglycan monomers with hyaluronic acid in the extracellular cartilage matrix. The polypeptide is Hyaluronan and proteoglycan link protein 1 (HAPLN1) (Sus scrofa (Pig)).